Consider the following 64-residue polypeptide: Potassium channel toxin kappa-KTx 3.4 (64 aa).

Positions 1-26 are cleaved as a signal peptide; the sequence is MKSTLMTASLLILVLLSIIDYASVYA. The propeptide occupies 27-36; that stretch reads EFIDSEISLE. 2 disulfides stabilise this stretch: cysteine 43-cysteine 61 and cysteine 47-cysteine 57.

It belongs to the short scorpion toxin superfamily. Potassium channel inhibitor kappa-KTx family. Kappa-KTx 3 subfamily. In terms of tissue distribution, expressed by the venom gland.

It is found in the secreted. Potassium channel inhibitor (Kv). The protein is Potassium channel toxin kappa-KTx 3.4 of Heterometrus petersii (Asian forest scorpion).